A 361-amino-acid polypeptide reads, in one-letter code: Chorismate synthase (361 aa).

2 residues coordinate NADP(+): R48 and R54. Residues 125–127 (RSS), 238–239 (NA), G278, 293–297 (KPTSS), and R319 each bind FMN.

The protein belongs to the chorismate synthase family. As to quaternary structure, homotetramer. FMNH2 serves as cofactor.

It carries out the reaction 5-O-(1-carboxyvinyl)-3-phosphoshikimate = chorismate + phosphate. It functions in the pathway metabolic intermediate biosynthesis; chorismate biosynthesis; chorismate from D-erythrose 4-phosphate and phosphoenolpyruvate: step 7/7. In terms of biological role, catalyzes the anti-1,4-elimination of the C-3 phosphate and the C-6 proR hydrogen from 5-enolpyruvylshikimate-3-phosphate (EPSP) to yield chorismate, which is the branch point compound that serves as the starting substrate for the three terminal pathways of aromatic amino acid biosynthesis. This reaction introduces a second double bond into the aromatic ring system. The polypeptide is Chorismate synthase (Escherichia coli (strain SE11)).